The following is a 153-amino-acid chain: Transcription antitermination protein NusB (153 aa).

Belongs to the NusB family.

Functionally, involved in transcription antitermination. Required for transcription of ribosomal RNA (rRNA) genes. Binds specifically to the boxA antiterminator sequence of the ribosomal RNA (rrn) operons. This chain is Transcription antitermination protein NusB, found in Symbiobacterium thermophilum (strain DSM 24528 / JCM 14929 / IAM 14863 / T).